The following is a 351-amino-acid chain: Glycerol-3-phosphate dehydrogenase [NAD(P)+] (351 aa).

Residues serine 12, tryptophan 13, histidine 33, and lysine 114 each contribute to the NADPH site. Residues lysine 114, glycine 145, and serine 147 each contribute to the sn-glycerol 3-phosphate site. Alanine 149 contributes to the NADPH binding site. Sn-glycerol 3-phosphate is bound by residues lysine 200, aspartate 253, serine 263, arginine 264, and asparagine 265. Lysine 200 functions as the Proton acceptor in the catalytic mechanism. Arginine 264 contacts NADPH. 2 residues coordinate NADPH: valine 288 and glutamate 290.

It belongs to the NAD-dependent glycerol-3-phosphate dehydrogenase family.

It localises to the cytoplasm. The enzyme catalyses sn-glycerol 3-phosphate + NAD(+) = dihydroxyacetone phosphate + NADH + H(+). It catalyses the reaction sn-glycerol 3-phosphate + NADP(+) = dihydroxyacetone phosphate + NADPH + H(+). It functions in the pathway membrane lipid metabolism; glycerophospholipid metabolism. Its function is as follows. Catalyzes the reduction of the glycolytic intermediate dihydroxyacetone phosphate (DHAP) to sn-glycerol 3-phosphate (G3P), the key precursor for phospholipid synthesis. The chain is Glycerol-3-phosphate dehydrogenase [NAD(P)+] from Lacticaseibacillus paracasei (strain ATCC 334 / BCRC 17002 / CCUG 31169 / CIP 107868 / KCTC 3260 / NRRL B-441) (Lactobacillus paracasei).